The sequence spans 240 residues: NADPH-flavin oxidoreductase (240 aa).

FMN-binding positions include His11–Arg15, Ser39, Gln67–Tyr69, Tyr128–Gly131, and Lys167–Arg169.

Belongs to the flavin oxidoreductase frp family. In terms of assembly, homodimer.

It catalyses the reaction FMNH2 + NADP(+) = FMN + NADPH + 2 H(+). In terms of biological role, catalyzes the NADPH-dependent reduction of FMN to FMNH(2). Involved in bioluminescence by providing FMNH(2) to luciferase. The protein is NADPH-flavin oxidoreductase of Vibrio harveyi (Beneckea harveyi).